Here is a 68-residue protein sequence, read N- to C-terminus: Large ribosomal subunit protein uL29 (68 aa).

This sequence belongs to the universal ribosomal protein uL29 family.

The chain is Large ribosomal subunit protein uL29 from Streptococcus thermophilus (strain ATCC BAA-250 / LMG 18311).